Consider the following 447-residue polypeptide: NADP-specific glutamate dehydrogenase (447 aa).

The substrate site is built by lysine 92, glutamine 113, and lysine 116. The active-site Proton donor is lysine 128. Position 167 (glycine 167) interacts with substrate. NADP(+) is bound by residues threonine 211 and asparagine 242. Serine 380 contacts substrate.

It belongs to the Glu/Leu/Phe/Val dehydrogenases family. Homohexamer.

The catalysed reaction is L-glutamate + NADP(+) + H2O = 2-oxoglutarate + NH4(+) + NADPH + H(+). Its activity is regulated as follows. Competitively inhibited by homoserine and by glutamine. Catalyzes the reversible oxidative deamination of glutamate to alpha-ketoglutarate and ammonia. This chain is NADP-specific glutamate dehydrogenase, found in Escherichia coli (strain K12).